Here is a 420-residue protein sequence, read N- to C-terminus: Glucose-1-phosphate adenylyltransferase (420 aa).

Alpha-D-glucose 1-phosphate is bound by residues Y97, G162, 177–178 (EK), and S188.

It belongs to the bacterial/plant glucose-1-phosphate adenylyltransferase family. In terms of assembly, homotetramer.

The catalysed reaction is alpha-D-glucose 1-phosphate + ATP + H(+) = ADP-alpha-D-glucose + diphosphate. The protein operates within glycan biosynthesis; glycogen biosynthesis. Involved in the biosynthesis of ADP-glucose, a building block required for the elongation reactions to produce glycogen. Catalyzes the reaction between ATP and alpha-D-glucose 1-phosphate (G1P) to produce pyrophosphate and ADP-Glc. The sequence is that of Glucose-1-phosphate adenylyltransferase from Pseudothermotoga lettingae (strain ATCC BAA-301 / DSM 14385 / NBRC 107922 / TMO) (Thermotoga lettingae).